The chain runs to 272 residues: Formamidopyrimidine-DNA glycosylase (272 aa).

P2 functions as the Schiff-base intermediate with DNA in the catalytic mechanism. Residue E3 is the Proton donor of the active site. K58 acts as the Proton donor; for beta-elimination activity in catalysis. Positions 91, 111, and 153 each coordinate DNA. The FPG-type zinc-finger motif lies at 238–272 (AVYGRANKACVICSKPLKEIRQAQRSTVFCINCQS). Catalysis depends on R262, which acts as the Proton donor; for delta-elimination activity.

The protein belongs to the FPG family. As to quaternary structure, monomer. The cofactor is Zn(2+).

It carries out the reaction Hydrolysis of DNA containing ring-opened 7-methylguanine residues, releasing 2,6-diamino-4-hydroxy-5-(N-methyl)formamidopyrimidine.. The catalysed reaction is 2'-deoxyribonucleotide-(2'-deoxyribose 5'-phosphate)-2'-deoxyribonucleotide-DNA = a 3'-end 2'-deoxyribonucleotide-(2,3-dehydro-2,3-deoxyribose 5'-phosphate)-DNA + a 5'-end 5'-phospho-2'-deoxyribonucleoside-DNA + H(+). Functionally, involved in base excision repair of DNA damaged by oxidation or by mutagenic agents. Acts as a DNA glycosylase that recognizes and removes damaged bases. Has a preference for oxidized purines, such as 7,8-dihydro-8-oxoguanine (8-oxoG). Has AP (apurinic/apyrimidinic) lyase activity and introduces nicks in the DNA strand. Cleaves the DNA backbone by beta-delta elimination to generate a single-strand break at the site of the removed base with both 3'- and 5'-phosphates. The polypeptide is Formamidopyrimidine-DNA glycosylase (Marinomonas sp. (strain MWYL1)).